The sequence spans 286 residues: UPF0761 membrane protein KPN78578_41360 (286 aa).

The next 7 helical transmembrane spans lie at 44–64 (LLSL…FPMF), 74–94 (FIFA…IEQF), 104–124 (VGAF…DSAL), 140–160 (FAVY…SLAI), 183–203 (LFPL…VPTT), 210–230 (AVIG…AFAL), and 244–264 (VISV…IVLL).

This sequence belongs to the UPF0761 family.

The protein localises to the cell inner membrane. This chain is UPF0761 membrane protein KPN78578_41360, found in Klebsiella pneumoniae subsp. pneumoniae (strain ATCC 700721 / MGH 78578).